Here is a 255-residue protein sequence, read N- to C-terminus: Probable cyclic nucleotide phosphodiesterase syc0937_d (255 aa).

7 residues coordinate Fe cation: D19, H21, D59, N89, H157, H196, and H198. AMP contacts are provided by residues H21, D59, and 89-90; that span reads NH. Position 198 (H198) interacts with AMP.

This sequence belongs to the cyclic nucleotide phosphodiesterase class-III family. Fe(2+) serves as cofactor.

The sequence is that of Probable cyclic nucleotide phosphodiesterase syc0937_d from Synechococcus sp. (strain ATCC 27144 / PCC 6301 / SAUG 1402/1) (Anacystis nidulans).